A 916-amino-acid chain; its full sequence is Translation initiation factor IF-2 (916 aa).

The tract at residues 58-317 (LEAEGHLPGA…GVTVPRGDGG (260 aa)) is disordered. Residues 120 to 142 (EKVAASEAADAKPAAGAPADTAK) are compositionally biased toward low complexity. A compositionally biased stretch (pro residues) spans 195–206 (SNIPRPAPPRPG). Gly residues-rich tracts occupy residues 214 to 227 (RPGG…GGRP) and 235 to 282 (SAGG…GRGG). Residues 283–294 (GKSKARKSKRAK) are compositionally biased toward basic residues. In terms of domain architecture, tr-type G spans 409–583 (IRPPVVTVMG…LTADAGLDLR (175 aa)). The tract at residues 418 to 425 (GHVDHGKT) is G1. 418-425 (GHVDHGKT) contributes to the GTP binding site. Positions 443-447 (GITQH) are G2. Positions 468 to 471 (DTPG) are G3. Residues 468–472 (DTPGH) and 522–525 (NKVD) contribute to the GTP site. The tract at residues 522–525 (NKVD) is G4. The interval 558–560 (SAR) is G5.

This sequence belongs to the TRAFAC class translation factor GTPase superfamily. Classic translation factor GTPase family. IF-2 subfamily.

It is found in the cytoplasm. Its function is as follows. One of the essential components for the initiation of protein synthesis. Protects formylmethionyl-tRNA from spontaneous hydrolysis and promotes its binding to the 30S ribosomal subunits. Also involved in the hydrolysis of GTP during the formation of the 70S ribosomal complex. This is Translation initiation factor IF-2 from Leifsonia xyli subsp. xyli (strain CTCB07).